We begin with the raw amino-acid sequence, 1384 residues long: Contactin-associated protein 1 (1384 aa).

Positions 1–19 (MMHLRLFCILLAAVSGAEG) are cleaved as a signal peptide. Topologically, residues 20–1283 (WGYYGCDEEL…PYYHDEGWVA (1264 aa)) are extracellular. The 144-residue stretch at 25–168 (CDEELVGPLY…IGLRLGLYGC (144 aa)) folds into the F5/8 type C domain. An intrachain disulfide couples cysteine 25 to cysteine 168. N-linked (GlcNAc...) asparagine glycans are attached at residues asparagine 120, asparagine 128, and asparagine 276. 2 consecutive Laminin G-like domains span residues 203–355 (FKTE…AFRC) and 389–538 (FRTW…FDTC). The cysteines at positions 323 and 355 are disulfide-linked. Residues asparagine 420, asparagine 499, and asparagine 518 are each glycosylated (N-linked (GlcNAc...) asparagine). Disulfide bonds link cysteine 506-cysteine 538, cysteine 544-cysteine 555, cysteine 549-cysteine 564, and cysteine 566-cysteine 576. An EGF-like 1 domain is found at 540-577 (ITDRCSPNMCEHDGRCYQSWDDFICYCELTGYKGETCH). Positions 576–795 (CHTPLYKESC…NTISFHTGAA (220 aa)) constitute a Fibrinogen C-terminal domain. 9 N-linked (GlcNAc...) asparagine glycosylation sites follow: asparagine 597, asparagine 653, asparagine 664, asparagine 763, asparagine 804, asparagine 843, asparagine 860, asparagine 948, and asparagine 956. The Laminin G-like 3 domain occupies 813–956 (FRTSAPSGVF…ANASEGTSPN (144 aa)). Intrachain disulfides connect cysteine 930/cysteine 957, cysteine 961/cysteine 974, cysteine 968/cysteine 983, and cysteine 985/cysteine 995. The EGF-like 2 domain occupies 957-996 (CTGHCAHPRLPCFHGGRCVERYSYYTCDCDLTAFDGPYCN). N-linked (GlcNAc...) asparagine glycans are attached at residues asparagine 1078 and asparagine 1147. The Laminin G-like 4 domain occupies 1088 to 1250 (FSTSSAPAVL…VQGELSESNC (163 aa)). The cysteines at positions 1209 and 1250 are disulfide-linked. A helical membrane pass occupies residues 1284 to 1304 (ILLGFLVAFLLLGLVGMLVLF). The Cytoplasmic segment spans residues 1305 to 1384 (YLQNHRYKGS…PQILEESRSE (80 aa)). A compositionally biased stretch (basic and acidic residues) spans 1319–1328 (EPKAAHEYHP). Positions 1319–1384 (EPKAAHEYHP…PQILEESRSE (66 aa)) are disordered. An SH3-binding motif is present at residues 1328-1369 (PGSKPPLPTSGPAQVPTPTAAPNQAPASAPAPAPTPAPAPGP). Over residues 1339–1355 (PAQVPTPTAAPNQAPAS) the composition is skewed to low complexity. Residues 1356 to 1368 (APAPAPTPAPAPG) show a composition bias toward pro residues. Phosphoserine is present on serine 1383.

The protein belongs to the neurexin family. Interacts with CNTN1/contactin in cis form. Predominantly expressed in brain. Weak expression detected in ovary, pancreas, colon, lung, heart, intestine and testis.

It localises to the membrane. Its subcellular location is the cell junction. The protein localises to the paranodal septate junction. Required, with CNTNAP2, for radial and longitudinal organization of myelinated axons. Plays a role in the formation of functional distinct domains critical for saltatory conduction of nerve impulses in myelinated nerve fibers. Demarcates the paranodal region of the axo-glial junction. In association with contactin involved in the signaling between axons and myelinating glial cells. The polypeptide is Contactin-associated protein 1 (CNTNAP1) (Homo sapiens (Human)).